Here is a 247-residue protein sequence, read N- to C-terminus: 3-deoxy-manno-octulosonate cytidylyltransferase (247 aa).

The protein belongs to the KdsB family.

The protein localises to the cytoplasm. The catalysed reaction is 3-deoxy-alpha-D-manno-oct-2-ulosonate + CTP = CMP-3-deoxy-beta-D-manno-octulosonate + diphosphate. The protein operates within nucleotide-sugar biosynthesis; CMP-3-deoxy-D-manno-octulosonate biosynthesis; CMP-3-deoxy-D-manno-octulosonate from 3-deoxy-D-manno-octulosonate and CTP: step 1/1. It functions in the pathway bacterial outer membrane biogenesis; lipopolysaccharide biosynthesis. Its function is as follows. Activates KDO (a required 8-carbon sugar) for incorporation into bacterial lipopolysaccharide in Gram-negative bacteria. The sequence is that of 3-deoxy-manno-octulosonate cytidylyltransferase from Rhodopseudomonas palustris (strain BisA53).